An 817-amino-acid chain; its full sequence is E3 ubiquitin-protein ligase TRIM9 (817 aa).

An RING-type zinc finger spans residues 10–50; it reads CPVCGSFYREPIILPCSHNLCQACARNILVQTPESESPQSR. The residue at position 41 (threonine 41) is a Phosphothreonine. Phosphoserine occurs at positions 44, 46, 49, and 53. 2 consecutive B box-type zinc fingers follow at residues 163 to 212 and 224 to 266; these read AAAL…LVPP and RKVS…VKAL. Positions 168, 171, 193, 198, 229, 232, 252, and 258 each coordinate Zn(2+). Positions 273-340 form a coiled coil; the sequence is HKSQLSQALN…KAQLLARVNK (68 aa). Residues 374–432 form the COS domain; the sequence is IKENDPSGFLQISDALIRRVHLTEDQWGKGTLTPRMTTDFDLSLDNSPLLQSIHQLDFV. The 96-residue stretch at 440–535 folds into the Fibronectin type-III domain; the sequence is VPATPILQLE…KTLVLQTSEA (96 aa). The disordered stretch occupies residues 535 to 557; it reads AAGAHETKPMKDTDSEEQTLPFP. Basic and acidic residues predominate over residues 537–547; sequence GAHETKPMKDT. Residues 613–794 enclose the B30.2/SPRY domain; sequence ETQSASYSQL…VQVSLWAPGL (182 aa).

The protein belongs to the TRIM/RBCC family. In terms of assembly, interacts with SNAP25. In terms of processing, auto-ubiquitinated. As to expression, brain. Expression is higher in the cerebral cortex and hippocampus (at protein level). Its expression is mainly confined to the central nervous system. The developing neocortex, the dorsal thalamus, the midbrain, the basal area of the hindbrain and spinal cord show high level of expression during embryogenesis. In adult brain, it is detected in the Purkinje cells of the cerebellum, in the hippocampus, and in the cortex.

The protein resides in the cytoplasm. It localises to the cell projection. Its subcellular location is the dendrite. The protein localises to the cytoplasmic vesicle. It is found in the secretory vesicle. The protein resides in the synaptic vesicle. It localises to the synapse. Its subcellular location is the cytoskeleton. The catalysed reaction is S-ubiquitinyl-[E2 ubiquitin-conjugating enzyme]-L-cysteine + [acceptor protein]-L-lysine = [E2 ubiquitin-conjugating enzyme]-L-cysteine + N(6)-ubiquitinyl-[acceptor protein]-L-lysine.. Its pathway is protein modification; protein ubiquitination. Its function is as follows. E3 ubiquitin-protein ligase which ubiquitinates itself in cooperation with an E2 enzyme UBE2D2/UBC4 and serves as a targeting signal for proteasomal degradation. May play a role in regulation of neuronal functions. May act as a regulator of synaptic vesicle exocytosis by controlling the availability of SNAP25 for the SNARE complex formation. This chain is E3 ubiquitin-protein ligase TRIM9 (Trim9), found in Mus musculus (Mouse).